We begin with the raw amino-acid sequence, 283 residues long: 4-diphosphocytidyl-2-C-methyl-D-erythritol kinase (283 aa).

The active site involves lysine 10. Residue 94 to 104 (PVAAGLAGGSS) participates in ATP binding. The active site involves aspartate 136.

The protein belongs to the GHMP kinase family. IspE subfamily.

It catalyses the reaction 4-CDP-2-C-methyl-D-erythritol + ATP = 4-CDP-2-C-methyl-D-erythritol 2-phosphate + ADP + H(+). It participates in isoprenoid biosynthesis; isopentenyl diphosphate biosynthesis via DXP pathway; isopentenyl diphosphate from 1-deoxy-D-xylulose 5-phosphate: step 3/6. Functionally, catalyzes the phosphorylation of the position 2 hydroxy group of 4-diphosphocytidyl-2C-methyl-D-erythritol. The sequence is that of 4-diphosphocytidyl-2-C-methyl-D-erythritol kinase from Enterococcus faecalis (strain ATCC 700802 / V583).